Reading from the N-terminus, the 377-residue chain is 5-hydroxytryptamine receptor 1D (377 aa).

Positions 1–23 are disordered; that stretch reads MSPLNQSAEGLPQEASNRSLNAT. Residues 1–38 lie on the Extracellular side of the membrane; the sequence is MSPLNQSAEGLPQEASNRSLNATETSEAWDPRTLQALK. N-linked (GlcNAc...) asparagine glycosylation is found at Asn-5, Asn-17, and Asn-21. A helical membrane pass occupies residues 39 to 64; that stretch reads ISLAVVLSVITLATVLSNAFVLTTIL. Residues 65 to 75 are Cytoplasmic-facing; that stretch reads LTRKLHTPANY. The helical transmembrane segment at 76–97 threads the bilayer; sequence LIGSLATTDLLVSILVMPISIA. At 98–109 the chain is on the extracellular side; the sequence is YTITHTWNFGQI. The chain crosses the membrane as a helical span at residues 110–134; the sequence is LCDIWLSSDITCCTASILHLCVIAL. Residues Cys-111 and Cys-188 are joined by a disulfide bond. Serotonin contacts are provided by Asp-118 and Cys-122. A DRY motif; important for ligand-induced conformation changes motif is present at residues 135 to 137; that stretch reads DRY. The Cytoplasmic segment spans residues 135–154; that stretch reads DRYWAITDALEYSKRRTAGH. The helical transmembrane segment at 155-176 threads the bilayer; it reads AATMIAIVWAISICISIPPLFW. The Extracellular segment spans residues 177–194; it reads RQAKAQEEMSDCLVNTSQ. A helical membrane pass occupies residues 195-218; that stretch reads ISYTIYSTCGAFYIPSVLLIILYG. The Cytoplasmic segment spans residues 219 to 300; the sequence is RIYRAARNRI…ISAARERKAT (82 aa). The helical transmembrane segment at 301-326 threads the bilayer; sequence KILGIILGAFIICWLPFFVVSLVLPI. Ser-321 lines the serotonin pocket. The Extracellular segment spans residues 327–335; the sequence is CRDSCWIHP. A helical transmembrane segment spans residues 336 to 359; it reads ALFDFFTWLGYLNSLINPIIYTVF. The NPxxY motif; important for ligand-induced conformation changes and signaling signature appears at 352 to 356; it reads NPIIY. Over 360–377 the chain is Cytoplasmic; the sequence is NEEFRQAFQKIVPFRKAS.

This sequence belongs to the G-protein coupled receptor 1 family. In terms of assembly, homodimer. Heterodimer with HTR1B. As to expression, detected in brain neocortex and caudate nucleus (at protein level).

The protein localises to the cell membrane. In terms of biological role, G-protein coupled receptor for 5-hydroxytryptamine (serotonin). Also functions as a receptor for ergot alkaloid derivatives, various anxiolytic and antidepressant drugs and other psychoactive substances. Ligand binding causes a conformation change that triggers signaling via guanine nucleotide-binding proteins (G proteins) and modulates the activity of downstream effectors, such as adenylate cyclase. HTR1D is coupled to G(i)/G(o) G alpha proteins and mediates inhibitory neurotransmission by inhibiting adenylate cyclase activity. Regulates the release of 5-hydroxytryptamine in the brain, and thereby affects neural activity. May also play a role in regulating the release of other neurotransmitters. May play a role in vasoconstriction. This is 5-hydroxytryptamine receptor 1D from Homo sapiens (Human).